The chain runs to 145 residues: VPCQIFQDDTKTLIKTIVTRINDISHTSVSAKQSVTGLDFIPGLHPILSLSKMDQTLAVYQQVLTSLPSQNVLQIANDLENLRDLLHLLAFSKSCSLPQTSGLHKPESLDGVLEALLYSTEVVALSRLQGSLQDILQQLDISPEC.

C95 and C145 are joined by a disulfide.

Belongs to the leptin family.

Its subcellular location is the secreted. In terms of biological role, key player in the regulation of energy balance and body weight control. Once released into the circulation, has central and peripheral effects by binding LEPR, found in many tissues, which results in the activation of several major signaling pathways. The chain is Leptin (LEP) from Meleagris gallopavo (Wild turkey).